Consider the following 221-residue polypeptide: MAQGILGKKIGMTQVFNEQGELVPVTIVDVAANVVLQQKNVDQDGYQATQIGFCDKREKNTSKPMLGHFKKATTAPKRFIKEINFSSDVNSNLANLVVGALITNDLFQVGDLVDVTGTSKGKGFAGSIKRHNQSRGPESHGSRYHRRPGSMGPIKGKLKGKKLPGHMGYETVTIQNLAILSIDTEKNLFLIKGNVPGPNKGFVMIKSAVKKLTKEQTHAKN.

The interval 123-156 is disordered; it reads GFAGSIKRHNQSRGPESHGSRYHRRPGSMGPIKG.

It belongs to the universal ribosomal protein uL3 family. In terms of assembly, part of the 50S ribosomal subunit. Forms a cluster with proteins L14 and L19.

Its function is as follows. One of the primary rRNA binding proteins, it binds directly near the 3'-end of the 23S rRNA, where it nucleates assembly of the 50S subunit. This chain is Large ribosomal subunit protein uL3, found in Aster yellows witches'-broom phytoplasma (strain AYWB).